The sequence spans 456 residues: tRNA modification GTPase MnmE (456 aa).

(6S)-5-formyl-5,6,7,8-tetrahydrofolate is bound by residues Arg21, Glu85, and Lys124. The region spanning Gln220 to Gly379 is the TrmE-type G domain. K(+) is bound at residue Asn230. GTP is bound by residues Asn230–Ser235, Ser249–Thr255, and Asp274–Gly277. Residue Ser234 coordinates Mg(2+). Positions 249, 251, and 254 each coordinate K(+). Thr255 lines the Mg(2+) pocket. Residue Lys456 coordinates (6S)-5-formyl-5,6,7,8-tetrahydrofolate.

This sequence belongs to the TRAFAC class TrmE-Era-EngA-EngB-Septin-like GTPase superfamily. TrmE GTPase family. Homodimer. Heterotetramer of two MnmE and two MnmG subunits. K(+) serves as cofactor.

It localises to the cytoplasm. Exhibits a very high intrinsic GTPase hydrolysis rate. Involved in the addition of a carboxymethylaminomethyl (cmnm) group at the wobble position (U34) of certain tRNAs, forming tRNA-cmnm(5)s(2)U34. In Leptospira interrogans serogroup Icterohaemorrhagiae serovar copenhageni (strain Fiocruz L1-130), this protein is tRNA modification GTPase MnmE.